A 459-amino-acid polypeptide reads, in one-letter code: uncharacterized protein (459 aa).

The region spanning 6-64 (KNKQEKNIIITIKRLGINGEGIGYYKKKIIFIPGALPNEVVVAKIVDRHPHYLEGELVR) is the TRAM domain. Positions 289, 318, 339, and 387 each coordinate S-adenosyl-L-methionine. C414 serves as the catalytic Nucleophile.

Belongs to the class I-like SAM-binding methyltransferase superfamily. RNA M5U methyltransferase family.

This is an uncharacterized protein from Lactobacillus johnsonii (strain CNCM I-12250 / La1 / NCC 533).